Consider the following 229-residue polypeptide: Prolactin (229 aa).

The first 30 residues, 1-30 (MDSKGSAQKGSRLLLLLVVSNLLLCQGVVS), serve as a signal peptide directing secretion. Cys-34 and Cys-41 are joined by a disulfide. A phosphoserine mark is found at Ser-56, Ser-64, and Ser-120. Intrachain disulfides connect Cys-88–Cys-204 and Cys-221–Cys-229.

This sequence belongs to the somatotropin/prolactin family. Interacts with PRLR.

The protein localises to the secreted. Prolactin acts primarily on the mammary gland by promoting lactation. The chain is Prolactin (PRL) from Capra hircus (Goat).